The following is a 32-amino-acid chain: Acatoxin 1 (32 aa).

Intrachain disulfides connect Cys1-Cys15, Cys8-Cys20, and Cys14-Cys26.

It localises to the secreted. The protein localises to the nematocyst. Its function is as follows. Reversibly inhibits acid-sensing ion channels (ASIC) in rat dorsal root ganglia neurons. Reversibly inhibits voltage-gated potassium channels (Kv) in rat DRG neurons. This chain is Acatoxin 1, found in Anthopleura cascaia (Sea anemone).